Here is a 220-residue protein sequence, read N- to C-terminus: Orotidine 5'-phosphate decarboxylase (220 aa).

Residues Asp12, Lys34, 60–69 (DFKVADIPNT), Ser117, 170–180 (PGVGAQGGKAS), Gly193, and Arg194 contribute to the substrate site. Lys62 serves as the catalytic Proton donor.

This sequence belongs to the OMP decarboxylase family. Type 1 subfamily. In terms of assembly, homodimer.

It carries out the reaction orotidine 5'-phosphate + H(+) = UMP + CO2. Its pathway is pyrimidine metabolism; UMP biosynthesis via de novo pathway; UMP from orotate: step 2/2. Its function is as follows. Catalyzes the decarboxylation of orotidine 5'-monophosphate (OMP) to uridine 5'-monophosphate (UMP). The chain is Orotidine 5'-phosphate decarboxylase from Methanosarcina mazei (strain ATCC BAA-159 / DSM 3647 / Goe1 / Go1 / JCM 11833 / OCM 88) (Methanosarcina frisia).